Here is a 318-residue protein sequence, read N- to C-terminus: NAD(P)H-dependent D-xylose reductase (318 aa).

Residue Tyr48 is the Proton donor of the active site. His110 is a binding site for substrate. NAD(+) contacts are provided by residues 165-166 (SN), 214-223 (SNFGPLSFLE), and 270-280 (KSTFPNTLAVN).

It belongs to the aldo/keto reductase family.

The enzyme catalyses xylitol + NAD(+) = D-xylose + NADH + H(+). It carries out the reaction xylitol + NADP(+) = D-xylose + NADPH + H(+). It functions in the pathway carbohydrate metabolism; D-xylose degradation. Reduces D-xylose into xylitol. Has a preference for NADPH, but can also utilize NADH as cosubstrate. The chain is NAD(P)H-dependent D-xylose reductase (XYL1) from Pachysolen tannophilus (Yeast).